Here is a 474-residue protein sequence, read N- to C-terminus: Trehalose-6-phosphate synthase (474 aa).

Residue arginine 10 coordinates D-glucose 6-phosphate. UDP-alpha-D-glucose is bound at residue 22–23 (GG). Residues tyrosine 77 and aspartate 131 each coordinate D-glucose 6-phosphate. Positions 263 and 268 each coordinate UDP-alpha-D-glucose. Position 301 (arginine 301) interacts with D-glucose 6-phosphate. Residues phenylalanine 340 and 366 to 370 (LVAKE) each bind UDP-alpha-D-glucose.

The protein belongs to the glycosyltransferase 20 family. Homotetramer.

It carries out the reaction D-glucose 6-phosphate + UDP-alpha-D-glucose = alpha,alpha-trehalose 6-phosphate + UDP + H(+). Its pathway is glycan biosynthesis; trehalose biosynthesis. In terms of biological role, probably involved in the osmoprotection via the biosynthesis of trehalose. Catalyzes the transfer of glucose from UDP-alpha-D-glucose (UDP-Glc) to D-glucose 6-phosphate (Glc-6-P) to form trehalose-6-phosphate. Acts with retention of the anomeric configuration of the UDP-sugar donor. The sequence is that of Trehalose-6-phosphate synthase from Pseudomonas savastanoi (Pseudomonas syringae pv. savastanoi).